Here is a 527-residue protein sequence, read N- to C-terminus: Tyrosine-protein kinase TXK (527 aa).

The segment at 58 to 81 (TQSNRGGVQPSKRKPLPPLPQEPP) is disordered. Positions 82-142 (DERIQVKALY…PSNYVTENRL (61 aa)) constitute an SH3 domain. Residue Tyr91 is modified to Phosphotyrosine; by autocatalysis. Residues 150 to 246 (WYHKNITRNQ…GLISRLRYPI (97 aa)) enclose the SH2 domain. Residues 271–527 (LAFVKEIGSG…QVLTEIAETW (257 aa)) form the Protein kinase domain. Residues 277 to 285 (IGSGQFGVV) and Lys299 contribute to the ATP site. Catalysis depends on Asp390, which acts as the Proton acceptor. Tyr420 carries the post-translational modification Phosphotyrosine; by FYN and autocatalysis.

This sequence belongs to the protein kinase superfamily. Tyr protein kinase family. TEC subfamily. As to quaternary structure, interacts with PARP1 and EEF1A1. Interacts with SH2D2A. Interacts with FYN. Post-translationally, phosphorylated at Tyr-420 by FYN. Autophosphorylation at Tyr-91 is critical for the activation of TXK, leading to the up-regulation of IFN-gamma gene transcription. In terms of processing, the cysteine string at the N-terminus is palmitoylated and required for the proper subcellular location. As to expression, expressed in early thymocytes, T-cells and mast cells.

Its subcellular location is the cytoplasm. It localises to the nucleus. The protein resides in the cell membrane. The catalysed reaction is L-tyrosyl-[protein] + ATP = O-phospho-L-tyrosyl-[protein] + ADP + H(+). With respect to regulation, activated by phosphorylation by FYN. Non-receptor tyrosine kinase that plays a redundant role with ITK in regulation of the adaptive immune response. Regulates the development, function and differentiation of conventional T-cells and nonconventional NKT-cells. When antigen presenting cells (APC) activate T-cell receptor (TCR), a series of phosphorylation leads to the recruitment of TXK to the cell membrane, where it is phosphorylated at Tyr-420. Phosphorylation leads to TXK full activation. Also contributes to signaling from many receptors and participates in multiple downstream pathways, including regulation of the actin cytoskeleton. Like ITK, can phosphorylate PLCG1, leading to its localization in lipid rafts and activation, followed by subsequent cleavage of its substrates. In turn, the endoplasmic reticulum releases calcium in the cytoplasm and the nuclear activator of activated T-cells (NFAT) translocates into the nucleus to perform its transcriptional duty. Plays a role in the positive regulation of IFNG transcription in T-helper 1 cells as part of an IFNG promoter-binding complex with PARP1 and EEF1A1. Within the complex, phosphorylates both PARP1 and EEF1A1. Also phosphorylates key sites in LCP2 leading to the up-regulation of Th1 preferred cytokine IL-2. Phosphorylates 'Tyr-201' of CTLA4 which leads to the association of PI-3 kinase with the CTLA4 receptor. This chain is Tyrosine-protein kinase TXK (Txk), found in Mus musculus (Mouse).